Here is a 194-residue protein sequence, read N- to C-terminus: Clathrin light chain (194 aa).

Residues 44–156 are disordered; that stretch reads TTFDNSNNNN…TDSTSGNTTH (113 aa). The segment covering 48–65 has biased composition (low complexity); that stretch reads NSNNNNNNNNHNNNSYNS. Composition is skewed to basic and acidic residues over residues 89-115 and 124-146; these read EYLE…KIAE and YSER…KSLE. The segment at 124–194 is required for binding clathrin heavy chain, localization to punctae, and for cytokinesis and fruiting body development; the sequence is YSEREAKKKT…LIRLKNQPIV (71 aa). Residues 147–156 are compositionally biased toward polar residues; it reads TDSTSGNTTH.

It belongs to the clathrin light chain family. As to quaternary structure, clathrin coats are formed from molecules containing 3 heavy chains and 3 light chains.

It is found in the cytoplasmic vesicle membrane. Its subcellular location is the membrane. The protein resides in the coated pit. Its function is as follows. Clathrin is the major protein of the polyhedral coat of coated pits and vesicles. This is Clathrin light chain (clc) from Dictyostelium discoideum (Social amoeba).